A 218-amino-acid chain; its full sequence is Sodium channel regulatory subunit beta-1 (218 aa).

Residues 1-18 (MGRLLAFVVGAALVSSAW) form the signal peptide. Over 19 to 157 (GGCVEVDSET…DKANRDMASI (139 aa)) the chain is Extracellular. 2 disulfide bridges follow: Cys21/Cys43 and Cys40/Cys121. In terms of domain architecture, Ig-like C2-type spans 22–150 (VEVDSETEAV…KIHLEVVDKA (129 aa)). Asn93, Asn110, Asn114, and Asn135 each carry an N-linked (GlcNAc...) asparagine glycan. A helical transmembrane segment spans residues 158–179 (VSEIMMYVLIVVLTIWLVAEMV). Over 180–218 (YCYKKIAAATEAAAQENASEYLAITSESKENCTGVQVAE) the chain is Cytoplasmic.

This sequence belongs to the sodium channel auxiliary subunit SCN1B (TC 8.A.17) family. In terms of assembly, a voltage-gated sodium (Nav) channel consists of an ion-conducting pore-forming alpha subunit functional on its own that is regulated by one or more beta subunits. Interacts with SCN1A; regulatory subunit of SCN1A/Nav1.1. Interacts with SCN3A; regulatory subunit of SCN3A/Nav1.3. Interacts with SCN4A; regulatory subunit of SCN4A/Nav1.4. Interacts with SCN5A; regulatory subunit of SCN5A/Nav1.5. Interacts with SCN8A; regulatory subunit of SCN8A/Nav1.6. Interacts with SCN9A; regulatory subunit of SCN9A/Nav1.7. Interacts with SCN10A; regulatory subunit of SCN10A/Nav1.8. Interacts with NFASC. Interacts with TMEM65.

It localises to the cell membrane. Its subcellular location is the perikaryon. The protein resides in the cell projection. It is found in the axon. Functionally, regulatory subunit of multiple voltage-gated sodium (Nav) channels directly mediating the depolarization of excitable membranes. Navs, also called VGSCs (voltage-gated sodium channels) or VDSCs (voltage-dependent sodium channels), operate by switching between closed and open conformations depending on the voltage difference across the membrane. In the open conformation they allow Na(+) ions to selectively pass through the pore, along their electrochemical gradient. The influx of Na+ ions provokes membrane depolarization, initiating the propagation of electrical signals throughout cells and tissues. The accessory beta subunits participate in localization and functional modulation of the Nav channels. Modulates the activity of SCN1A/Nav1.1, SCN2A/Nav1.2, SCN3A/Nav1.3, SCN4A/Nav1.4, SCN5A/Nav1.5, SCN8A/Nav1.6, SCN9A/Nav1.7 and SCN10A/Nav1.8. This is Sodium channel regulatory subunit beta-1 from Oryctolagus cuniculus (Rabbit).